The chain runs to 279 residues: Zinc finger AN1 and C2H2 domain-containing stress-associated protein 11 (279 aa).

2 consecutive AN1-type zinc fingers follow at residues 7-55 (PDLG…REDV) and 95-145 (ATKK…KLPF). C13, C18, C28, C31, C36, H39, H45, C47, C101, C106, C118, C121, C126, H129, H135, and C137 together coordinate Zn(2+). Residues 152–178 (STTRKEAKTTRPNKAHPSTSSSSSSSR) are disordered. Residues 169–178 (STSSSSSSSR) are compositionally biased toward low complexity. C2H2-type zinc fingers lie at residues 213–236 (EVCP…EKTH) and 250–273 (DVCP…ERDH).

Functionally, may be involved in environmental stress response. The protein is Zinc finger AN1 and C2H2 domain-containing stress-associated protein 11 (SAP11) of Arabidopsis thaliana (Mouse-ear cress).